A 604-amino-acid polypeptide reads, in one-letter code: Glutamine--fructose-6-phosphate aminotransferase [isomerizing] (604 aa).

Cys2 functions as the Nucleophile; for GATase activity in the catalytic mechanism. The 217-residue stretch at 2 to 218 (CGIVGVVGNT…DKELVIVKKD (217 aa)) folds into the Glutamine amidotransferase type-2 domain. SIS domains are found at residues 284–423 (IIKS…ANGK) and 456–594 (VEQL…VDKP). Lys599 functions as the For Fru-6P isomerization activity in the catalytic mechanism.

In terms of assembly, homodimer.

The protein localises to the cytoplasm. It catalyses the reaction D-fructose 6-phosphate + L-glutamine = D-glucosamine 6-phosphate + L-glutamate. Its function is as follows. Catalyzes the first step in hexosamine metabolism, converting fructose-6P into glucosamine-6P using glutamine as a nitrogen source. This is Glutamine--fructose-6-phosphate aminotransferase [isomerizing] from Streptococcus agalactiae serotype V (strain ATCC BAA-611 / 2603 V/R).